The chain runs to 257 residues: PHD finger protein Alfin1 (257 aa).

Residues 145-200 (SKDQLTAHNNGSNSKYKSSGKSRQSESQTKGVKMSAPVKEEVDSGEEEEEDDDEQG) are disordered. Over residues 153-166 (NNGSNSKYKSSGKS) the composition is skewed to low complexity. A compositionally biased stretch (acidic residues) spans 187–199 (DSGEEEEEDDDEQ). A PHD-type zinc finger spans residues 200–252 (GATCGACGDNYGTDEFWICCDMCEKWFHGKCVKITPAKAEHIKQYKCPGCSIK).

This sequence belongs to the Alfin family. As to quaternary structure, interacts with H3K4me3 and to a lesser extent with H3K4me2. Predominantly expressed in the roots.

The protein resides in the nucleus. Histone-binding component that specifically recognizes H3 tails trimethylated on 'Lys-4' (H3K4me3), which mark transcription start sites of virtually all active genes. Transcriptional regulator that binds specifically to DNA sequences 5'-GNGGTG-3' or 5'-GTGGNG-3', including promoter elements of the salt-inducible PRP2 gene. Plays a role in salinity tolerance. This Medicago sativa (Alfalfa) protein is PHD finger protein Alfin1 (ALFIN-1).